A 217-amino-acid chain; its full sequence is Fucoxanthin-chlorophyll a-c binding protein A, chloroplastic (217 aa).

The transit peptide at 1-39 (MKSAVMAVACAAAPGLRRPSAFNGAALTTSAKSSSAMKM) directs the protein to the chloroplast. The next 3 helical transmembrane spans lie at 81 to 101 (IAMLAIAGHLTQQNARLPGML), 122 to 142 (IPPAGLAQIFAFIGFLELAVM), and 183 to 203 (GRAAQMGILALMVHEELNNKP).

It belongs to the fucoxanthin chlorophyll protein family. As to quaternary structure, the LHC complex of chromophytic algae is composed of fucoxanthin, chlorophyll A and C bound non-covalently by fucoxanthin chlorophyll proteins (FCPs). The ratio of pigments in this LHC is; fucoxanthin: chlorophyll C: chlorophyll A; (0.6-1): (0.1-0.3): (1).

It localises to the plastid. Its subcellular location is the chloroplast thylakoid membrane. Its function is as follows. The light-harvesting complex (LHC) functions as a light receptor, it captures and delivers excitation energy to photosystems with which it is closely associated. Energy is transferred from the carotenoid and chlorophyll C (or B) to chlorophyll A and the photosynthetic reaction centers where it is used to synthesize ATP and reducing power. The chain is Fucoxanthin-chlorophyll a-c binding protein A, chloroplastic (FCPA) from Macrocystis pyrifera (Giant kelp).